The following is a 315-amino-acid chain: Putative carboxypeptidase RC0549 (315 aa).

S125 (nucleophile) is an active-site residue. Catalysis depends on charge relay system residues E225 and H288.

Belongs to the peptidase S66 family.

The chain is Putative carboxypeptidase RC0549 from Rickettsia conorii (strain ATCC VR-613 / Malish 7).